Here is a 148-residue protein sequence, read N- to C-terminus: Ribonuclease pancreatic (148 aa).

A signal peptide spans 1-25 (MGLEKSLILLPLLVLVFGWVQSSLG). Substrate is bound by residues Lys-32 and Arg-35. The active-site Proton acceptor is the His-36. 4 disulfide bridges follow: Cys-50–Cys-108, Cys-64–Cys-119, Cys-82–Cys-134, and Cys-89–Cys-96. N-linked (GlcNAc...) asparagine glycosylation is present at Asn-58. Position 65-69 (65-69 (KPVNT)) interacts with substrate. Residue Asn-86 is glycosylated (N-linked (GlcNAc...) asparagine). The substrate site is built by Lys-90 and Arg-109. Residue His-143 is the Proton donor of the active site.

It belongs to the pancreatic ribonuclease family. As to quaternary structure, monomer. Interacts with and forms tight 1:1 complexes with RNH1. Dimerization of two such complexes may occur. Interaction with RNH1 inhibits this protein. As to expression, pancreas.

The protein resides in the secreted. It carries out the reaction an [RNA] containing cytidine + H2O = an [RNA]-3'-cytidine-3'-phosphate + a 5'-hydroxy-ribonucleotide-3'-[RNA].. The catalysed reaction is an [RNA] containing uridine + H2O = an [RNA]-3'-uridine-3'-phosphate + a 5'-hydroxy-ribonucleotide-3'-[RNA].. Endonuclease that catalyzes the cleavage of RNA on the 3' side of pyrimidine nucleotides. Acts on single-stranded and double-stranded RNA. This chain is Ribonuclease pancreatic (RNASE1), found in Chionomys nivalis (European snow vole).